We begin with the raw amino-acid sequence, 141 residues long: Large ribosomal subunit protein uL11 (141 aa).

It belongs to the universal ribosomal protein uL11 family. Part of the ribosomal stalk of the 50S ribosomal subunit. Interacts with L10 and the large rRNA to form the base of the stalk. L10 forms an elongated spine to which L12 dimers bind in a sequential fashion forming a multimeric L10(L12)X complex. One or more lysine residues are methylated.

Its function is as follows. Forms part of the ribosomal stalk which helps the ribosome interact with GTP-bound translation factors. The chain is Large ribosomal subunit protein uL11 from Brevibacillus brevis (strain 47 / JCM 6285 / NBRC 100599).